Here is a 408-residue protein sequence, read N- to C-terminus: Multidrug resistance protein MdtG (408 aa).

10 consecutive transmembrane segments (helical) span residues 13 to 33 (LYIA…VMPF), 51 to 71 (LWSG…SPFW), 89 to 109 (LGMA…QFLL), 112 to 132 (AALG…AIQV), 138 to 158 (GWAL…GPLL), 170 to 190 (PVFF…FFFI), 221 to 241 (LFVT…ILTL), 253 to 273 (LAFI…LSAP), 287 to 307 (ILVA…FVQS), and 375 to 395 (AVFL…WLSL).

It belongs to the major facilitator superfamily. DHA1 family. MdtG (TC 2.A.1.2.20) subfamily.

The protein resides in the cell inner membrane. The chain is Multidrug resistance protein MdtG from Dickeya zeae (strain Ech586) (Dickeya dadantii (strain Ech586)).